Here is a 57-residue protein sequence, read N- to C-terminus: UPF0391 membrane protein AZOSEA39630 (57 aa).

2 helical membrane-spanning segments follow: residues 4-24 (WAII…TGVA) and 37-57 (IALA…VLVF).

The protein belongs to the UPF0391 family.

Its subcellular location is the cell membrane. The sequence is that of UPF0391 membrane protein AZOSEA39630 from Aromatoleum aromaticum (strain DSM 19018 / LMG 30748 / EbN1) (Azoarcus sp. (strain EbN1)).